We begin with the raw amino-acid sequence, 253 residues long: Imidazole glycerol phosphate synthase subunit HisF (253 aa).

Residues Asp11 and Asp130 contribute to the active site.

This sequence belongs to the HisA/HisF family. Heterodimer of HisH and HisF.

The protein localises to the cytoplasm. The enzyme catalyses 5-[(5-phospho-1-deoxy-D-ribulos-1-ylimino)methylamino]-1-(5-phospho-beta-D-ribosyl)imidazole-4-carboxamide + L-glutamine = D-erythro-1-(imidazol-4-yl)glycerol 3-phosphate + 5-amino-1-(5-phospho-beta-D-ribosyl)imidazole-4-carboxamide + L-glutamate + H(+). It participates in amino-acid biosynthesis; L-histidine biosynthesis; L-histidine from 5-phospho-alpha-D-ribose 1-diphosphate: step 5/9. Its function is as follows. IGPS catalyzes the conversion of PRFAR and glutamine to IGP, AICAR and glutamate. The HisF subunit catalyzes the cyclization activity that produces IGP and AICAR from PRFAR using the ammonia provided by the HisH subunit. The chain is Imidazole glycerol phosphate synthase subunit HisF from Geobacter sulfurreducens (strain ATCC 51573 / DSM 12127 / PCA).